The chain runs to 92 residues: Small ribosomal subunit protein uS19c (92 aa).

It belongs to the universal ribosomal protein uS19 family.

It localises to the plastid. The protein localises to the chloroplast. Protein S19 forms a complex with S13 that binds strongly to the 16S ribosomal RNA. The polypeptide is Small ribosomal subunit protein uS19c (Angiopteris evecta (Mule's foot fern)).